Reading from the N-terminus, the 336-residue chain is Acetyl-coenzyme A carboxylase carboxyl transferase subunit beta (336 aa).

The CoA carboxyltransferase N-terminal domain occupies 27 to 297; sequence LWTKCESCQG…VAPAPAPAAT (271 aa). Zn(2+) is bound by residues Cys31, Cys34, Cys50, and Cys53. A C4-type zinc finger spans residues 31–53; it reads CESCQGILYRPDLERNLEVCPKC. The disordered stretch occupies residues 287–336; it reads SVAPAPAPAATVDPEPESAEPEAPAEEAGPAGAAGDQAGESQDEGDPRNA. The span at 300-311 shows a compositional bias: acidic residues; the sequence is PEPESAEPEAPA. The segment covering 312–326 has biased composition (low complexity); it reads EEAGPAGAAGDQAGE.

This sequence belongs to the AccD/PCCB family. In terms of assembly, acetyl-CoA carboxylase is a heterohexamer composed of biotin carboxyl carrier protein (AccB), biotin carboxylase (AccC) and two subunits each of ACCase subunit alpha (AccA) and ACCase subunit beta (AccD). Requires Zn(2+) as cofactor.

The protein resides in the cytoplasm. It catalyses the reaction N(6)-carboxybiotinyl-L-lysyl-[protein] + acetyl-CoA = N(6)-biotinyl-L-lysyl-[protein] + malonyl-CoA. It functions in the pathway lipid metabolism; malonyl-CoA biosynthesis; malonyl-CoA from acetyl-CoA: step 1/1. Component of the acetyl coenzyme A carboxylase (ACC) complex. Biotin carboxylase (BC) catalyzes the carboxylation of biotin on its carrier protein (BCCP) and then the CO(2) group is transferred by the transcarboxylase to acetyl-CoA to form malonyl-CoA. This chain is Acetyl-coenzyme A carboxylase carboxyl transferase subunit beta, found in Halorhodospira halophila (strain DSM 244 / SL1) (Ectothiorhodospira halophila (strain DSM 244 / SL1)).